We begin with the raw amino-acid sequence, 484 residues long: Phosphomethylpyrimidine synthase (484 aa).

Residues Asn97, Met126, Tyr156, His192, 212–214 (SRG), 253–256 (DSLR), and Glu292 contribute to the substrate site. His296 is a Zn(2+) binding site. Tyr319 is a binding site for substrate. Zn(2+) is bound at residue His360. Residues Cys440, Cys443, and Cys448 each contribute to the [4Fe-4S] cluster site.

This sequence belongs to the ThiC family. Requires [4Fe-4S] cluster as cofactor.

The catalysed reaction is 5-amino-1-(5-phospho-beta-D-ribosyl)imidazole + S-adenosyl-L-methionine = 4-amino-2-methyl-5-(phosphooxymethyl)pyrimidine + CO + 5'-deoxyadenosine + formate + L-methionine + 3 H(+). It participates in cofactor biosynthesis; thiamine diphosphate biosynthesis. Catalyzes the synthesis of the hydroxymethylpyrimidine phosphate (HMP-P) moiety of thiamine from aminoimidazole ribotide (AIR) in a radical S-adenosyl-L-methionine (SAM)-dependent reaction. This chain is Phosphomethylpyrimidine synthase, found in Synechococcus sp. (strain CC9605).